Here is a 544-residue protein sequence, read N- to C-terminus: Aspartokinase 2, chloroplastic (544 aa).

A chloroplast-targeting transit peptide spans 1–84 (MASLQLYGVK…SSGTGKELTC (84 aa)). ATP is bound by residues lysine 87, glycine 90, and serine 119. Glutamate 203 serves as a coordination point for substrate. ACT domains lie at 401–479 (IAST…RRSI) and 481–544 (SLIG…ETDP).

Belongs to the aspartokinase family. As to expression, expressed in stems, leaves, floral organs and young seedlings.

It is found in the plastid. Its subcellular location is the chloroplast. It catalyses the reaction L-aspartate + ATP = 4-phospho-L-aspartate + ADP. Its pathway is amino-acid biosynthesis; L-lysine biosynthesis via DAP pathway; (S)-tetrahydrodipicolinate from L-aspartate: step 1/4. It participates in amino-acid biosynthesis; L-methionine biosynthesis via de novo pathway; L-homoserine from L-aspartate: step 1/3. It functions in the pathway amino-acid biosynthesis; L-threonine biosynthesis; L-threonine from L-aspartate: step 1/5. Allosterically inhibited by lysine, but not by S-adenosyl-L-methionine (SAM). K(0.5) for lysine in the presence of physiological concentrations of substrates is 12.5 uM. No inhibition by threonine or leucine and no activation or inhibition by alanine, cysteine, isoleucine, serine, valine, methionine, glutamine, asparagine, glutamic acid or arginine. Involved in the first step of essential amino acids lysine, threonine, methionine and isoleucine synthesis via the aspartate-family pathway. The polypeptide is Aspartokinase 2, chloroplastic (AK2) (Arabidopsis thaliana (Mouse-ear cress)).